The following is a 133-amino-acid chain: Small ribosomal subunit protein eS8 (133 aa).

Positions 1–22 (MGFYQGPDNRKITGGLKGKHRD) are disordered.

This sequence belongs to the eukaryotic ribosomal protein eS8 family. Part of the 30S ribosomal subunit.

This chain is Small ribosomal subunit protein eS8, found in Saccharolobus islandicus (strain Y.N.15.51 / Yellowstone #2) (Sulfolobus islandicus).